The following is a 466-amino-acid chain: Asparagine--tRNA ligase (466 aa).

This sequence belongs to the class-II aminoacyl-tRNA synthetase family. Homodimer.

The protein localises to the cytoplasm. The enzyme catalyses tRNA(Asn) + L-asparagine + ATP = L-asparaginyl-tRNA(Asn) + AMP + diphosphate + H(+). This is Asparagine--tRNA ligase from Enterobacter sp. (strain 638).